We begin with the raw amino-acid sequence, 517 residues long: L-amino-acid oxidase (517 aa).

A signal peptide spans 1-18 (MNVFFMFSLLFLAALESC). An intrachain disulfide couples C29 to C192. FAD-binding positions include 62 to 63 (MA), 82 to 83 (EA), R90, and 106 to 109 (GPMR). R109 contacts substrate. N191 is a glycosylation site (N-linked (GlcNAc...) asparagine). V280 lines the FAD pocket. C350 and C431 are joined by a disulfide. A glycan (N-linked (GlcNAc...) asparagine) is linked at N380. Y391 contributes to the substrate binding site. FAD-binding positions include E476 and 483–488 (GWLDST). Position 483–484 (483–484 (GW)) interacts with substrate.

This sequence belongs to the flavin monoamine oxidase family. FIG1 subfamily. Homodimer; non-covalently linked. It depends on FAD as a cofactor. Post-translationally, N-glycosylated. In terms of tissue distribution, expressed by the venom gland.

The protein localises to the secreted. The catalysed reaction is an L-alpha-amino acid + O2 + H2O = a 2-oxocarboxylate + H2O2 + NH4(+). Its function is as follows. Catalyzes an oxidative deamination of predominantly hydrophobic and aromatic L-amino acids, thus producing hydrogen peroxide that may contribute to the diverse toxic effects of this enzyme. Exhibits diverse biological activities, such as hemorrhage, hemolysis, edema, apoptosis of vascular endothelial cells or tumor cell lines, antibacterial and antiparasitic activities, as well as regulation of platelet aggregation. Effects of snake L-amino oxidases on platelets are controversial, since they either induce aggregation or inhibit agonist-induced aggregation. These different effects are probably due to different experimental conditions. This is L-amino-acid oxidase from Notechis scutatus scutatus (Mainland tiger snake).